A 368-amino-acid polypeptide reads, in one-letter code: Ferredoxin--NADP reductase 2 (368 aa).

Aspartate 57, glutamine 65, tyrosine 70, valine 110, phenylalanine 145, aspartate 310, and threonine 351 together coordinate FAD.

This sequence belongs to the ferredoxin--NADP reductase type 2 family. As to quaternary structure, homodimer. FAD is required as a cofactor.

The catalysed reaction is 2 reduced [2Fe-2S]-[ferredoxin] + NADP(+) + H(+) = 2 oxidized [2Fe-2S]-[ferredoxin] + NADPH. The sequence is that of Ferredoxin--NADP reductase 2 from Cupriavidus pinatubonensis (strain JMP 134 / LMG 1197) (Cupriavidus necator (strain JMP 134)).